The chain runs to 434 residues: Beta-enolase (434 aa).

Ser2 carries the N-acetylserine modification. The substrate site is built by His158 and Glu167. Glu210 (proton donor) is an active-site residue. Mg(2+)-binding residues include Asp245, Glu293, and Asp318. Residues Glu293 and Asp318 each coordinate substrate. Lys343 (proton acceptor) is an active-site residue. Residues 370–373 (SHRS) and Lys394 each bind substrate.

It belongs to the enolase family. As to quaternary structure, homodimer. Interacts with PNKD. Mg(2+) is required as a cofactor.

It localises to the cytoplasm. It catalyses the reaction (2R)-2-phosphoglycerate = phosphoenolpyruvate + H2O. It participates in carbohydrate degradation; glycolysis; pyruvate from D-glyceraldehyde 3-phosphate: step 4/5. Its function is as follows. Glycolytic enzyme that catalyzes the conversion of 2-phosphoglycerate to phosphoenolpyruvate. This chain is Beta-enolase (ENO3), found in Gallus gallus (Chicken).